The chain runs to 378 residues: UDP-N-acetylglucosamine--N-acetylmuramyl-(pentapeptide) pyrophosphoryl-undecaprenol N-acetylglucosamine transferase (378 aa).

UDP-N-acetyl-alpha-D-glucosamine-binding positions include 14 to 16, N125, R165, S193, and Q293; that span reads TGG.

Belongs to the glycosyltransferase 28 family. MurG subfamily.

The protein resides in the cell inner membrane. It catalyses the reaction di-trans,octa-cis-undecaprenyl diphospho-N-acetyl-alpha-D-muramoyl-L-alanyl-D-glutamyl-meso-2,6-diaminopimeloyl-D-alanyl-D-alanine + UDP-N-acetyl-alpha-D-glucosamine = di-trans,octa-cis-undecaprenyl diphospho-[N-acetyl-alpha-D-glucosaminyl-(1-&gt;4)]-N-acetyl-alpha-D-muramoyl-L-alanyl-D-glutamyl-meso-2,6-diaminopimeloyl-D-alanyl-D-alanine + UDP + H(+). Its pathway is cell wall biogenesis; peptidoglycan biosynthesis. In terms of biological role, cell wall formation. Catalyzes the transfer of a GlcNAc subunit on undecaprenyl-pyrophosphoryl-MurNAc-pentapeptide (lipid intermediate I) to form undecaprenyl-pyrophosphoryl-MurNAc-(pentapeptide)GlcNAc (lipid intermediate II). The polypeptide is UDP-N-acetylglucosamine--N-acetylmuramyl-(pentapeptide) pyrophosphoryl-undecaprenol N-acetylglucosamine transferase (Bartonella bacilliformis (strain ATCC 35685 / KC583 / Herrer 020/F12,63)).